A 615-amino-acid chain; its full sequence is Prickle planar cell polarity protein 3 (615 aa).

Residues 1-12 show a composition bias toward basic residues; that stretch reads MFARGSRRRRSG. A disordered region spans residues 1–26; it reads MFARGSRRRRSGRAPPEAEDPDRGQP. A PET domain is found at 74–182; sequence SDFQRHSISD…IVRIFPVTIT (109 aa). 3 LIM zinc-binding domains span residues 184-249, 250-309, and 310-373; these read AICE…CLRP, RCQA…RHAE, and YCDG…SEPT. Disordered regions lie at residues 396–567 and 587–615; these read ASFS…LGER and TFNSPSLSLPRDSRAGMPRQARDKNCIVA. Polar residues predominate over residues 405 to 415; it reads SETTTKGTSTE. 2 positions are modified to phosphoserine: Ser-475 and Ser-491. The segment covering 508–531 has biased composition (basic residues); that stretch reads PSRRRHHHHNHHHHHNRHPSRRRH. The segment covering 537-555 has biased composition (low complexity); the sequence is GSGSDSESCSSSPSSSSSE. The span at 606-615 shows a compositional bias: basic and acidic residues; the sequence is QARDKNCIVA.

Belongs to the prickle / espinas / testin family. As to quaternary structure, interacts with VANGL2 via its C-terminus. The VANGL2-dependent membrane recruitment of PRICKLE3 is a prerequisite for its polarization. Interacts with WTIP. WTIP is involved in the recruitment of PRICKLE3 to the basal body. Interacts with MT-ATP8, a component of the mitochondrial complex V. As to expression, widely expressed.

The protein resides in the cytoplasm. It localises to the cell membrane. It is found in the mitochondrion. In terms of biological role, involved in the planar cell polarity (PCP) pathway that is essential for the polarization of epithelial cells during morphogenetic processes, including gastrulation and neurulation. PCP is maintained by two molecular modules, the global and the core modules, PRICKLE3 being part of the core module. Distinct complexes of the core module segregate to opposite sides of the cell, where they interact with the opposite complex in the neighboring cell at or near the adherents junctions. Involved in the organization of the basal body. Involved in cilia growth and positioning. Required for proper assembly, stability, and function of mitochondrial membrane ATP synthase (mitochondrial complex V). In Homo sapiens (Human), this protein is Prickle planar cell polarity protein 3.